Consider the following 55-residue polypeptide: uncharacterized protein (55 aa).

2 helical membrane-spanning segments follow: residues 2–19 and 24–46; these read VIGLFVLSIVMLIVSFIA and LLSIMISFLLFTSAVVLAMFRYF.

The protein localises to the cell membrane. This is an uncharacterized protein from Alkalihalophilus pseudofirmus (strain ATCC BAA-2126 / JCM 17055 / OF4) (Bacillus pseudofirmus).